A 607-amino-acid polypeptide reads, in one-letter code: UvrABC system protein C (607 aa).

Residues 15–94 form the GIY-YIG domain; sequence ENPGVYLMKN…IKRHRPYFNV (80 aa). The 36-residue stretch at 204–239 folds into the UVR domain; that stretch reads DQVLKLLIRLMNEASARLDYETAALRRDQIASIKEV.

Belongs to the UvrC family. As to quaternary structure, interacts with UvrB in an incision complex.

It localises to the cytoplasm. Functionally, the UvrABC repair system catalyzes the recognition and processing of DNA lesions. UvrC both incises the 5' and 3' sides of the lesion. The N-terminal half is responsible for the 3' incision and the C-terminal half is responsible for the 5' incision. The polypeptide is UvrABC system protein C (Dehalococcoides mccartyi (strain ATCC BAA-2100 / JCM 16839 / KCTC 5957 / BAV1)).